The following is a 573-amino-acid chain: Eukaryotic translation initiation factor 3 subunit D (573 aa).

The segment at 111 to 162 is disordered; that stretch reads VFTRGGRGQRGARGTERGGRAQLSRGRGGQYGGGYDRGGRSAAGGRGGRRFG. The segment covering 136-156 has biased composition (gly residues); it reads GRGGQYGGGYDRGGRSAAGGR. The segment at 301-315 is RNA gate; sequence ALDMVTVNENAVDAP. The tract at residues 552–573 is disordered; that stretch reads PAGGLDEEEDNGDLGQEEDDEE. Acidic residues predominate over residues 556 to 573; the sequence is LDEEEDNGDLGQEEDDEE.

This sequence belongs to the eIF-3 subunit D family. As to quaternary structure, component of the eukaryotic translation initiation factor 3 (eIF-3) complex.

The protein localises to the cytoplasm. Functionally, mRNA cap-binding component of the eukaryotic translation initiation factor 3 (eIF-3) complex, which is involved in protein synthesis of a specialized repertoire of mRNAs and, together with other initiation factors, stimulates binding of mRNA and methionyl-tRNAi to the 40S ribosome. The eIF-3 complex specifically targets and initiates translation of a subset of mRNAs involved in cell proliferation. In the eIF-3 complex, eif3d specifically recognizes and binds the 7-methylguanosine cap of a subset of mRNAs. This is Eukaryotic translation initiation factor 3 subunit D from Pyricularia oryzae (strain 70-15 / ATCC MYA-4617 / FGSC 8958) (Rice blast fungus).